Reading from the N-terminus, the 389-residue chain is Chitinase-3-like protein 1 (389 aa).

Residues 1-29 form the signal peptide; it reads MHTSTEARMGMRAALTGFAVLMLLQSCSA. The region spanning 30–389 is the GH18 domain; it reads YKLVCYFTSW…LTNAIKDALA (360 aa). Residues Cys34 and Cys59 are joined by a disulfide bond. The N-linked (GlcNAc...) asparagine glycan is linked to Asn68. Residues 79-80, 106-109, Tyr150, and 213-216 each bind chitin; these read EW, GGWK, and MTYD. A disulfide bond links Cys309 and Cys372. The important for AKT1 activation and IL8 production stretch occupies residues 333–347; sequence QWVGYEDKESVKNKV. Trp361 contacts chitin.

The protein belongs to the glycosyl hydrolase 18 family. As to quaternary structure, monomer. Detected in lung in pulmonary macrophages and alveolar type 2 cells and in bronchoalveolar lavage (BAL) fluids. Expressed in mammary tumor cells (at protein level). Expressed in lung. Not detected in non-inflammatory colon.

It localises to the secreted. Its subcellular location is the extracellular space. The protein resides in the cytoplasm. It is found in the endoplasmic reticulum. Its function is as follows. Carbohydrate-binding lectin with a preference for chitin. Has no chitinase activity. May play a role in tissue remodeling and in the capacity of cells to respond to and cope with changes in their environment. Plays a role in T-helper cell type 2 (Th2) inflammatory response and IL-13-induced inflammation, regulating allergen sensitization, inflammatory cell apoptosis, dendritic cell accumulation and M2 macrophage differentiation. Facilitates invasion of pathogenic enteric bacteria into colonic mucosa and lymphoid organs. Mediates activation of AKT1 signaling pathway and subsequent IL8 production in colonic epithelial cells. Regulates antibacterial responses in lung by contributing to macrophage bacterial killing, controlling bacterial dissemination and augmenting host tolerance. Also regulates hyperoxia-induced injury, inflammation and epithelial apoptosis in lung. This Mus musculus (Mouse) protein is Chitinase-3-like protein 1 (Chi3l1).